A 556-amino-acid polypeptide reads, in one-letter code: Urocanate hydratase (556 aa).

NAD(+)-binding positions include 52–53 (GG), Gln130, 176–178 (GMG), Glu196, Arg201, 242–243 (NA), 263–267 (QTSAH), 273–274 (YL), and Tyr322. Cys410 is a catalytic residue. Gly492 contacts NAD(+).

It belongs to the urocanase family. NAD(+) is required as a cofactor.

The protein resides in the cytoplasm. It catalyses the reaction 4-imidazolone-5-propanoate = trans-urocanate + H2O. It participates in amino-acid degradation; L-histidine degradation into L-glutamate; N-formimidoyl-L-glutamate from L-histidine: step 2/3. Its function is as follows. Catalyzes the conversion of urocanate to 4-imidazolone-5-propionate. The polypeptide is Urocanate hydratase (Bradyrhizobium sp. (strain BTAi1 / ATCC BAA-1182)).